The following is a 586-amino-acid chain: Arginine--tRNA ligase (586 aa).

The 'HIGH' region signature appears at 128–138; sequence ANPTGPLHVGH.

Belongs to the class-I aminoacyl-tRNA synthetase family. Monomer.

It localises to the cytoplasm. The catalysed reaction is tRNA(Arg) + L-arginine + ATP = L-arginyl-tRNA(Arg) + AMP + diphosphate. This Legionella pneumophila (strain Corby) protein is Arginine--tRNA ligase.